The primary structure comprises 429 residues: 3-phosphoshikimate 1-carboxyvinyltransferase (429 aa).

Lys-20, Ser-21, and Arg-25 together coordinate 3-phosphoshikimate. Lys-20 is a binding site for phosphoenolpyruvate. Phosphoenolpyruvate-binding residues include Gly-89 and Arg-118. 3-phosphoshikimate is bound by residues Ser-164, Ser-165, Gln-166, Ser-192, Asp-311, and Lys-338. Gln-166 provides a ligand contact to phosphoenolpyruvate. The active-site Proton acceptor is Asp-311. Residues Arg-342 and Arg-384 each contribute to the phosphoenolpyruvate site.

Belongs to the EPSP synthase family. As to quaternary structure, monomer.

It is found in the cytoplasm. It carries out the reaction 3-phosphoshikimate + phosphoenolpyruvate = 5-O-(1-carboxyvinyl)-3-phosphoshikimate + phosphate. It participates in metabolic intermediate biosynthesis; chorismate biosynthesis. In terms of biological role, catalyzes the transfer of the enolpyruvyl moiety of phosphoenolpyruvate (PEP) to the 5-hydroxyl of shikimate-3-phosphate (S3P) to produce enolpyruvyl shikimate-3-phosphate and inorganic phosphate. The chain is 3-phosphoshikimate 1-carboxyvinyltransferase from Methanococcus maripaludis (strain DSM 14266 / JCM 13030 / NBRC 101832 / S2 / LL).